A 554-amino-acid chain; its full sequence is MSSQVAGLLQLTALIAALALAYRPLGDYMARVYSSEKHYRPEKWMYKAIGANPAAEMRWPAYLRGVLAFSAMSVLFLYLMQRVQGSLPGSLGFSSIDPDQAFNTAASFVANTNWQSYYGEQAMGHVVQTGGLAVQNFLSAAVGMAVAVALVRGFARSRTGELGNFWADLVRGTVRILVPISVIGAIVLVAAGAIQNFSGIHQVGQFAGGTQEWNGGAVASQEAIKELGTNGGGYFNANSAHPFENPNPLSNLFEVFLILLIPFALTRTFGRMAGSLKQGYAILGAMAVIWIGFTALMMWTEFAHRGPAFEIAGGAMEGKEARFGIAGSSIFAVATTLTSTGAVNSFHSSYTGFGGGITLLGMQLGEIAPGGVGSGLYGMLIMAIIAVFIAGLMVGRTPEYLGKKIGTRQIKFAACYILITPALVLGFTAVAMALPTPADSMTNSGAHGFSEILYAYTSGANNNGSAFAGLNADTQWFNTTIGIAMLLGRFLPMVFVLALAGSLAEQQPVPETAGTLRTDKPLYSGLLVGTILIITGLTYFPALALGPLAEGLAS.

12 helical membrane-spanning segments follow: residues 1-21 (MSSQVAGLLQLTALIAALALA), 59-79 (WPAYLRGVLAFSAMSVLFLYL), 131-151 (GLAVQNFLSAAVGMAVAVALV), 174-194 (VRILVPISVIGAIVLVAAGAI), 246-266 (PNPLSNLFEVFLILLIPFALT), 279-299 (GYAILGAMAVIWIGFTALMMW), 323-343 (FGIAGSSIFAVATTLTSTGAV), 352-372 (GFGGGITLLGMQLGEIAPGGV), 375-395 (GLYGMLIMAIIAVFIAGLMVG), 412-432 (FAACYILITPALVLGFTAVAM), 481-501 (IGIAMLLGRFLPMVFVLALAG), and 525-545 (GLLVGTILIITGLTYFPALAL).

The protein belongs to the KdpA family. In terms of assembly, the system is composed of three essential subunits: KdpA, KdpB and KdpC.

The protein localises to the cell membrane. Part of the high-affinity ATP-driven potassium transport (or Kdp) system, which catalyzes the hydrolysis of ATP coupled with the electrogenic transport of potassium into the cytoplasm. This subunit binds the extracellular potassium ions and delivers the ions to the membrane domain of KdpB through an intramembrane tunnel. The sequence is that of Potassium-transporting ATPase potassium-binding subunit from Streptomyces griseus subsp. griseus (strain JCM 4626 / CBS 651.72 / NBRC 13350 / KCC S-0626 / ISP 5235).